Here is a 286-residue protein sequence, read N- to C-terminus: Energy-coupling factor transporter ATP-binding protein EcfA2 (286 aa).

The ABC transporter domain occupies 3–246 (IRFDNVSYTY…KKKLADWHIG (244 aa)). 40–47 (GQTGSGKS) contacts ATP.

This sequence belongs to the ABC transporter superfamily. Energy-coupling factor EcfA family. Forms a stable energy-coupling factor (ECF) transporter complex composed of 2 membrane-embedded substrate-binding proteins (S component), 2 ATP-binding proteins (A component) and 2 transmembrane proteins (T component).

The protein resides in the cell membrane. Its function is as follows. ATP-binding (A) component of a common energy-coupling factor (ECF) ABC-transporter complex. Unlike classic ABC transporters this ECF transporter provides the energy necessary to transport a number of different substrates. The polypeptide is Energy-coupling factor transporter ATP-binding protein EcfA2 (Staphylococcus aureus (strain USA300)).